The chain runs to 810 residues: Phenylalanine--tRNA ligase beta subunit (810 aa).

Residues 39-154 (APPTEKIVVG…EGTPVGQDIR (116 aa)) form the tRNA-binding domain. In terms of domain architecture, B5 spans 405–480 (PQRAPVSMRA…RIYGFEKIPA (76 aa)). Mg(2+)-binding residues include Asp458, Asp464, Glu467, and Glu468. The region spanning 707-809 (SKFPPVRRDI…MARVYGARLR (103 aa)) is the FDX-ACB domain.

Belongs to the phenylalanyl-tRNA synthetase beta subunit family. Type 1 subfamily. In terms of assembly, tetramer of two alpha and two beta subunits. Mg(2+) serves as cofactor.

The protein resides in the cytoplasm. It catalyses the reaction tRNA(Phe) + L-phenylalanine + ATP = L-phenylalanyl-tRNA(Phe) + AMP + diphosphate + H(+). The chain is Phenylalanine--tRNA ligase beta subunit from Burkholderia pseudomallei (strain 1710b).